Reading from the N-terminus, the 1216-residue chain is ATP-dependent helicase/nuclease subunit A (1216 aa).

The UvrD-like helicase ATP-binding domain occupies 26–488 (QKKTAEQIEA…IILKENFRSS (463 aa)). 47–54 (ASAGSGKT) lines the ATP pocket. A UvrD-like helicase C-terminal domain is found at 515–802 (KHQLVFANTK…ELMTIHKSKG (288 aa)).

The protein belongs to the helicase family. AddA subfamily. Heterodimer of AddA and AddB/RexB. It depends on Mg(2+) as a cofactor.

It catalyses the reaction Couples ATP hydrolysis with the unwinding of duplex DNA by translocating in the 3'-5' direction.. The enzyme catalyses ATP + H2O = ADP + phosphate + H(+). Its function is as follows. The heterodimer acts as both an ATP-dependent DNA helicase and an ATP-dependent, dual-direction single-stranded exonuclease. Recognizes the chi site generating a DNA molecule suitable for the initiation of homologous recombination. The AddA nuclease domain is required for chi fragment generation; this subunit has the helicase and 3' -&gt; 5' nuclease activities. This Streptococcus pneumoniae serotype 2 (strain D39 / NCTC 7466) protein is ATP-dependent helicase/nuclease subunit A.